The primary structure comprises 493 residues: Probable GTP-binding protein OBGM, mitochondrial (493 aa).

The transit peptide at 1 to 28 (MWLIRAIVPVRYLGSYKRPQKPPWMRNP) directs the protein to the mitochondrion. The 256-residue stretch at 48–303 (TRMRDRFTLY…AVLILELKSI (256 aa)) folds into the Obg domain. 2 disordered regions span residues 65–89 (SGCS…GGRG) and 146–215 (GEIP…EDDD). Residues 187-196 (SESDQDDTEQ) show a composition bias toward acidic residues. The OBG-type G domain maps to 304–476 (ADVGLVGMPN…LKDGLKMLVD (173 aa)). Residues 310–317 (GMPNAGKS) and 356–360 (DIPGL) each bind GTP.

It belongs to the TRAFAC class OBG-HflX-like GTPase superfamily. OBG GTPase family.

It is found in the mitochondrion. Functionally, may bind GTP and have GTPase activity. This Arabidopsis thaliana (Mouse-ear cress) protein is Probable GTP-binding protein OBGM, mitochondrial (ATOBGM).